The primary structure comprises 831 residues: Periplasmic nitrate reductase (831 aa).

A signal peptide (tat-type signal) is located at residues 1–29 (MKFTRREFMKAQAAASAAAVAGIALPATA). The 4Fe-4S Mo/W bis-MGD-type domain occupies 41–97 (IKWEKAPCRFCGTGCSVLVGTQHGRVVATQGDPESPVNKGLNCVKGYFLSKIMYGKD). [4Fe-4S] cluster-binding residues include C48, C51, C55, and C83. Mo-bis(molybdopterin guanine dinucleotide) is bound by residues K85, Q152, N177, C181, 214–221 (WGSNMAEM), 245–249 (STYTH), 264–266 (QSD), M374, Q378, N484, 510–511 (SD), K533, D560, and 720–729 (TGRVLEHWHS). W796 contributes to the substrate binding site. Residues N804 and K821 each contribute to the Mo-bis(molybdopterin guanine dinucleotide) site.

This sequence belongs to the prokaryotic molybdopterin-containing oxidoreductase family. NasA/NapA/NarB subfamily. As to quaternary structure, component of the periplasmic nitrate reductase NapAB complex composed of NapA and NapB. Requires [4Fe-4S] cluster as cofactor. The cofactor is Mo-bis(molybdopterin guanine dinucleotide). Predicted to be exported by the Tat system. The position of the signal peptide cleavage has not been experimentally proven.

The protein resides in the periplasm. It carries out the reaction 2 Fe(II)-[cytochrome] + nitrate + 2 H(+) = 2 Fe(III)-[cytochrome] + nitrite + H2O. Its function is as follows. Catalytic subunit of the periplasmic nitrate reductase complex NapAB. Receives electrons from NapB and catalyzes the reduction of nitrate to nitrite. The protein is Periplasmic nitrate reductase of Psychromonas ingrahamii (strain DSM 17664 / CCUG 51855 / 37).